A 568-amino-acid polypeptide reads, in one-letter code: Potassium-transporting ATPase potassium-binding subunit (568 aa).

Transmembrane regions (helical) follow at residues 3–23 (TEIL…YPLG), 64–84 (FLKA…VLLV), 133–153 (FVIM…MAGI), 179–199 (ILLP…TPMG), 255–275 (MVEC…LGFY), 281–301 (LAYS…CINV), 375–395 (FGGV…AVFI), 418–438 (IATI…AISS), 497–517 (IVLI…AGLL), and 536–556 (TFGI…FFPV).

Belongs to the KdpA family. The system is composed of three essential subunits: KdpA, KdpB and KdpC.

It localises to the cell inner membrane. In terms of biological role, part of the high-affinity ATP-driven potassium transport (or Kdp) system, which catalyzes the hydrolysis of ATP coupled with the electrogenic transport of potassium into the cytoplasm. This subunit binds the periplasmic potassium ions and delivers the ions to the membrane domain of KdpB through an intramembrane tunnel. The sequence is that of Potassium-transporting ATPase potassium-binding subunit from Bacteroides thetaiotaomicron (strain ATCC 29148 / DSM 2079 / JCM 5827 / CCUG 10774 / NCTC 10582 / VPI-5482 / E50).